Consider the following 790-residue polypeptide: Phenylalanine--tRNA ligase beta subunit (790 aa).

The tRNA-binding domain occupies 40–149 (AEKVSGVVVG…IDAPVGTDIN (110 aa)). Positions 402-479 (NKQIKINLSI…RIYGYSKLPE (78 aa)) constitute a B5 domain. The Mg(2+) site is built by Asp-457, Asp-463, Glu-466, and Glu-467. Positions 698-789 (SKYPSVSRDI…LKTKFNIEQR (92 aa)) constitute an FDX-ACB domain.

The protein belongs to the phenylalanyl-tRNA synthetase beta subunit family. Type 1 subfamily. In terms of assembly, tetramer of two alpha and two beta subunits. Mg(2+) serves as cofactor.

The protein localises to the cytoplasm. It catalyses the reaction tRNA(Phe) + L-phenylalanine + ATP = L-phenylalanyl-tRNA(Phe) + AMP + diphosphate + H(+). This is Phenylalanine--tRNA ligase beta subunit from Francisella tularensis subsp. tularensis (strain SCHU S4 / Schu 4).